A 270-amino-acid polypeptide reads, in one-letter code: NADPH-dependent 7-cyano-7-deazaguanine reductase (270 aa).

A substrate-binding site is contributed by 79 to 81 (IES). 81–82 (SK) is an NADPH binding site. Cysteine 177 acts as the Thioimide intermediate in catalysis. Catalysis depends on aspartate 184, which acts as the Proton donor. A substrate-binding site is contributed by 216–217 (HE). 245–246 (RG) is an NADPH binding site.

It belongs to the GTP cyclohydrolase I family. QueF type 2 subfamily. Homodimer.

The protein localises to the cytoplasm. It catalyses the reaction 7-aminomethyl-7-carbaguanine + 2 NADP(+) = 7-cyano-7-deazaguanine + 2 NADPH + 3 H(+). It participates in tRNA modification; tRNA-queuosine biosynthesis. Its function is as follows. Catalyzes the NADPH-dependent reduction of 7-cyano-7-deazaguanine (preQ0) to 7-aminomethyl-7-deazaguanine (preQ1). In Acinetobacter baumannii (strain SDF), this protein is NADPH-dependent 7-cyano-7-deazaguanine reductase.